We begin with the raw amino-acid sequence, 559 residues long: Sulfite reductase [NADPH] hemoprotein beta-component (559 aa).

Residues Cys-423, Cys-429, Cys-468, and Cys-472 each contribute to the [4Fe-4S] cluster site. Residue Cys-472 coordinates siroheme.

This sequence belongs to the nitrite and sulfite reductase 4Fe-4S domain family. Alpha(8)-beta(8). The alpha component is a flavoprotein, the beta component is a hemoprotein. Requires siroheme as cofactor. [4Fe-4S] cluster is required as a cofactor.

The enzyme catalyses hydrogen sulfide + 3 NADP(+) + 3 H2O = sulfite + 3 NADPH + 4 H(+). It participates in sulfur metabolism; hydrogen sulfide biosynthesis; hydrogen sulfide from sulfite (NADPH route): step 1/1. Component of the sulfite reductase complex that catalyzes the 6-electron reduction of sulfite to sulfide. This is one of several activities required for the biosynthesis of L-cysteine from sulfate. In Thiocapsa roseopersicina, this protein is Sulfite reductase [NADPH] hemoprotein beta-component.